We begin with the raw amino-acid sequence, 101 residues long: MLVFLHAVLVTALILLLIGRIQLLERLLLSHLLNLTTVSNVLGVPDSSLRVNCLQLLKPDCLDFNILHKVLAETRLLVVVLRVIFLVLLGFSCYTLLGALF.

The signal sequence occupies residues 1–23 (MLVFLHAVLVTALILLLIGRIQL). The chain crosses the membrane as a helical span at residues 76-96 (LLVVVLRVIFLVLLGFSCYTL).

Belongs to the coronaviruses ns7/ns7a protein family.

The protein resides in the host membrane. May function in the formation of membrane-bound replication complexes or in the assembly of the virus. The polypeptide is Non-structural 7a protein (Feline enteric coronavirus (strain 79-1683) (FeCoV)).